Reading from the N-terminus, the 208-residue chain is Small ribosomal subunit protein uS4 (208 aa).

Residues 98–158 (RRLDNIVYRL…EKSRKVASIN (61 aa)) form the S4 RNA-binding domain.

The protein belongs to the universal ribosomal protein uS4 family. Part of the 30S ribosomal subunit. Contacts protein S5. The interaction surface between S4 and S5 is involved in control of translational fidelity.

Its function is as follows. One of the primary rRNA binding proteins, it binds directly to 16S rRNA where it nucleates assembly of the body of the 30S subunit. With S5 and S12 plays an important role in translational accuracy. The protein is Small ribosomal subunit protein uS4 of Geotalea daltonii (strain DSM 22248 / JCM 15807 / FRC-32) (Geobacter daltonii).